Here is a 92-residue protein sequence, read N- to C-terminus: Acylphosphatase (92 aa).

Residues 5–92 form the Acylphosphatase-like domain; the sequence is QVQLFVRGRV…GDFFDFRITD (88 aa). Residues Arg-20 and Asn-38 contribute to the active site.

It belongs to the acylphosphatase family.

It carries out the reaction an acyl phosphate + H2O = a carboxylate + phosphate + H(+). The chain is Acylphosphatase (acyP) from Sorangium cellulosum (strain So ce56) (Polyangium cellulosum (strain So ce56)).